Here is a 232-residue protein sequence, read N- to C-terminus: Phosphatidylserine decarboxylase proenzyme (232 aa).

The active-site Schiff-base intermediate with substrate; via pyruvic acid is the S190. S190 bears the Pyruvic acid (Ser); by autocatalysis mark.

This sequence belongs to the phosphatidylserine decarboxylase family. PSD-A subfamily. In terms of assembly, heterodimer of a large membrane-associated beta subunit and a small pyruvoyl-containing alpha subunit. Pyruvate serves as cofactor. Post-translationally, is synthesized initially as an inactive proenzyme. Formation of the active enzyme involves a self-maturation process in which the active site pyruvoyl group is generated from an internal serine residue via an autocatalytic post-translational modification. Two non-identical subunits are generated from the proenzyme in this reaction, and the pyruvate is formed at the N-terminus of the alpha chain, which is derived from the carboxyl end of the proenzyme. The post-translation cleavage follows an unusual pathway, termed non-hydrolytic serinolysis, in which the side chain hydroxyl group of the serine supplies its oxygen atom to form the C-terminus of the beta chain, while the remainder of the serine residue undergoes an oxidative deamination to produce ammonia and the pyruvoyl prosthetic group on the alpha chain.

It is found in the cell membrane. It catalyses the reaction a 1,2-diacyl-sn-glycero-3-phospho-L-serine + H(+) = a 1,2-diacyl-sn-glycero-3-phosphoethanolamine + CO2. Its pathway is phospholipid metabolism; phosphatidylethanolamine biosynthesis; phosphatidylethanolamine from CDP-diacylglycerol: step 2/2. In terms of biological role, catalyzes the formation of phosphatidylethanolamine (PtdEtn) from phosphatidylserine (PtdSer). The protein is Phosphatidylserine decarboxylase proenzyme of Mesorhizobium japonicum (strain LMG 29417 / CECT 9101 / MAFF 303099) (Mesorhizobium loti (strain MAFF 303099)).